Consider the following 698-residue polypeptide: Elongation factor G (698 aa).

Residues 8 to 290 (ERYRNIGISA…AVIEFLPSPV (283 aa)) form the tr-type G domain. GTP contacts are provided by residues 17-24 (AHIDAGKT), 88-92 (DTPGH), and 142-145 (NKMD).

It belongs to the TRAFAC class translation factor GTPase superfamily. Classic translation factor GTPase family. EF-G/EF-2 subfamily.

It localises to the cytoplasm. In terms of biological role, catalyzes the GTP-dependent ribosomal translocation step during translation elongation. During this step, the ribosome changes from the pre-translocational (PRE) to the post-translocational (POST) state as the newly formed A-site-bound peptidyl-tRNA and P-site-bound deacylated tRNA move to the P and E sites, respectively. Catalyzes the coordinated movement of the two tRNA molecules, the mRNA and conformational changes in the ribosome. This is Elongation factor G from Azoarcus sp. (strain BH72).